Reading from the N-terminus, the 1316-residue chain is MLDVNFFDELRIGLATAEDIRQWSYGEVKKPETINYRTLKPEKDGLFCEKIFGPTRDWECYCGKYKRVRFKGIICERCGVEVTRAKVRRERMGHIELAAPVTHIWYFKGVPSRLGYLLDLAPKDLEKIIYFAAYVITSVDEEMRHNELSTLEAEMMVERKAVEDQRDADLEARAQKLEADLAELEAEGAKADARRKVRDSGEREMRQIRDRAQRELDRLEDIWNTFTKLAPKQLIVDENLYRELVDRYGEYFTGAMGAESIQKLIENFDIDAEAEQLRDVIRNGKGQKKLRALKRLKVVAAFQQSGNSPMGMVLDAVPVIPPELRPMVQLDGGRFATSDLNDLYRRVINRNNRLKRLIDLGAPEIIVNNEKRMLQESVDALFDNGRRGRPVTGPGNRPLKSLSDLLKGKQGRFRQNLLGKRVDYSGRSVIVVGPQLKLHQCGLPKLMALELFKPFVMKRLVDLNHAQNIKSAKRMVERQRPQVWDVLEEVIAEHPVLLNRAPTLHRLGIQAFEPMLVEGKAIQLHPLVCEAFNADFDGDQMAVHLPLSAEAQAEARILMLSSNNILSPASGRPLAMPRLDMVTGLYYLTTEVEGDKGEYRPAAKDTPEVGVYSSPAEAIMAADRGVLSVRAKIKVRLTQLRPPAEIEAELFGANGWQPGDAWMAETTLGRVLFNELLPVGYPFVNKQMHKKVQASIINDLAERYPMIVVAQTVDKLKDAGFYWATRSGVTVSMADVLVPPRKKEILDQYEERAEKVEKQFQRGALNHDERNEALVEIWKEATDEVGQALREHYPADNPIITIVDSGATGNFTQTRTLAGMKGLVTNPKGEFIPRPVKSSFREGLTVLEYFINTHGARKGLADTALRTADSGYLTRRLVDVSQDVIVREHDCETERGIVVELAERQPDGTLIRDPYIETSAYARTLGTDAVDEAGNVIVARGEDLGDPEIDALLAAGITSVKVRSVLTCTTGTGVCATCYGRSMATGKLVDIGEAVGIVAAQSIGEPGTQLTMRTFHQGGVGEDITGGLPRVQELFEARIPRGKAPIADVTGRVRLEDGERFYKITIVPDDGSEEVVYDKLSKRQRLRVFKHEDGSERVLSDGDHVEVGQQLMEGSADPHEVLRVQGPREVQIHLVREVQEVYRAQGVSIHDKHIEVIVRQMLRRVTIIDSGSTEFLPGSLIDRAEFEAENRRVVAEGGEPAAGRPVLMGITKASLATDSWLSAASFQETTRVLTDAAINCRSDKLNGLKENVIIGKLIPAGTGINRYRNIQVQPTEEARAAAYTIPSYEDQYYSPDFGQATGAAVPLDDYGYSDYR.

Zn(2+)-binding residues include C60, C62, C75, and C78. Mg(2+) contacts are provided by D535, D537, and D539. Positions 891, 968, 975, and 978 each coordinate Zn(2+).

Belongs to the RNA polymerase beta' chain family. The RNAP catalytic core consists of 2 alpha, 1 beta, 1 beta' and 1 omega subunit. When a sigma factor is associated with the core the holoenzyme is formed, which can initiate transcription. Mg(2+) serves as cofactor. It depends on Zn(2+) as a cofactor.

The enzyme catalyses RNA(n) + a ribonucleoside 5'-triphosphate = RNA(n+1) + diphosphate. Functionally, DNA-dependent RNA polymerase catalyzes the transcription of DNA into RNA using the four ribonucleoside triphosphates as substrates. In Mycobacterium avium (strain 104), this protein is DNA-directed RNA polymerase subunit beta'.